The chain runs to 604 residues: Sulfite reductase [NADPH] flavoprotein alpha-component (604 aa).

In terms of domain architecture, Flavodoxin-like spans 65–203 (VTILYGSQTG…AAGQWHADVL (139 aa)). Residues 71-76 (SQTGNG), 118-121 (STHG), and 154-163 (LGDSSYEFFC) each bind FMN. One can recognise an FAD-binding FR-type domain in the interval 236–453 (QNPYSAEVLV…VEPNKHFRLP (218 aa)). Residues threonine 324, leucine 358, 392–395 (RLYS), 410–412 (TVA), and 425–428 (GGAS) contribute to the FAD site. Residues 524–525 (SR), 530–534 (KIYVQ), and aspartate 566 each bind NADP(+). Tyrosine 604 lines the FAD pocket.

The protein belongs to the NADPH-dependent sulphite reductase flavoprotein subunit CysJ family. This sequence in the N-terminal section; belongs to the flavodoxin family. In the C-terminal section; belongs to the flavoprotein pyridine nucleotide cytochrome reductase family. Alpha(8)-beta(8). The alpha component is a flavoprotein, the beta component is a hemoprotein. FAD serves as cofactor. FMN is required as a cofactor.

It carries out the reaction hydrogen sulfide + 3 NADP(+) + 3 H2O = sulfite + 3 NADPH + 4 H(+). It participates in sulfur metabolism; hydrogen sulfide biosynthesis; hydrogen sulfide from sulfite (NADPH route): step 1/1. Component of the sulfite reductase complex that catalyzes the 6-electron reduction of sulfite to sulfide. This is one of several activities required for the biosynthesis of L-cysteine from sulfate. The flavoprotein component catalyzes the electron flow from NADPH -&gt; FAD -&gt; FMN to the hemoprotein component. This Shewanella sp. (strain MR-7) protein is Sulfite reductase [NADPH] flavoprotein alpha-component.